A 331-amino-acid polypeptide reads, in one-letter code: Centriolar satellite-associated tubulin polyglutamylase complex regulator 1 (331 aa).

The segment at 1–111 (MLSPERLALP…HCLLQLLCPD (111 aa)) is required for interaction with PCM1. Positions 1–225 (MLSPERLALP…SCPPPALVKE (225 aa)) are required for interaction with TPGS1, LRRC49, and TTLL1. Residues 112–331 (FPLELTQKAA…STEETDESET (220 aa)) are required for interaction with TPGS2. The segment at 288 to 331 (SPEASCLPSRTPPRVGSPWRPLHHSRKVDGESDGSTEETDESET) is disordered. Residues 318–331 (ESDGSTEETDESET) show a composition bias toward acidic residues. Serine 319 bears the Phosphoserine mark.

Belongs to the CSTPP1 family. In terms of assembly, interacts with PCM1. Interacts with TTLL1, TPGS1, TPGS2 and LRRC49; the interactions link CSTPP1 to the complex TPGC. Binds to alpha-tubulin.

Its subcellular location is the cytoplasm. It localises to the cytoskeleton. It is found in the microtubule organizing center. The protein resides in the centrosome. The protein localises to the centriolar satellite. Regulator of the tubulin polyglutamylase complex (TPGC) that controls cytoskeletal organization, nuclear shape, and cilium disassembly by balancing microtubule and actin assembly. Regulates the assembly and stability of the TPGC and thereby modulates polyglutamylation of the microtubule, which antagonizes MAP4 binding. This chain is Centriolar satellite-associated tubulin polyglutamylase complex regulator 1, found in Homo sapiens (Human).